Consider the following 163-residue polypeptide: Olfactory marker protein (163 aa).

Position 2 is an N-acetylalanine (alanine 2).

It belongs to the olfactory marker protein family. As to quaternary structure, interacts with BEX1 and BEX2. In terms of tissue distribution, uniquely associated with mature olfactory receptor neurons.

Its subcellular location is the cytoplasm. May act as a modulator of the olfactory signal-transduction cascade. In Mus musculus (Mouse), this protein is Olfactory marker protein (Omp).